Reading from the N-terminus, the 348-residue chain is UDP-rhamnose/UDP-galactose transporter 2 (348 aa).

10 consecutive transmembrane segments (helical) span residues Ala-12 to Ala-32, Phe-44 to Val-64, Leu-81 to Leu-101, Val-104 to Val-124, Glu-133 to Val-153, Phe-160 to Leu-180, Ala-196 to Gly-216, Leu-230 to Ile-250, Ser-257 to Phe-277, and Ile-286 to Glu-306.

It belongs to the TPT transporter family. TPT (TC 2.A.7.9) subfamily.

It localises to the golgi apparatus membrane. In terms of biological role, nucleotide-sugar transporter that transports UDP-rhamnose or UDP-galactose and UMP in a strict counter-exchange mode. The sequence is that of UDP-rhamnose/UDP-galactose transporter 2 from Arabidopsis thaliana (Mouse-ear cress).